The primary structure comprises 202 residues: Peptide deformylase (202 aa).

Residues Cys121 and His163 each coordinate Fe cation. Glu164 is a catalytic residue. His167 is a binding site for Fe cation.

This sequence belongs to the polypeptide deformylase family. Fe(2+) is required as a cofactor.

It catalyses the reaction N-terminal N-formyl-L-methionyl-[peptide] + H2O = N-terminal L-methionyl-[peptide] + formate. Removes the formyl group from the N-terminal Met of newly synthesized proteins. Requires at least a dipeptide for an efficient rate of reaction. N-terminal L-methionine is a prerequisite for activity but the enzyme has broad specificity at other positions. In Synechococcus sp. (strain CC9311), this protein is Peptide deformylase.